A 107-amino-acid polypeptide reads, in one-letter code: Integration host factor subunit beta (107 aa).

The disordered stretch occupies residues 54–107 (NRRPARVGRNPKSGEKVQVPEKHVPHFKPGKELRERVDGRAGEPLKNDEPEDGQ). Basic and acidic residues predominate over residues 65–101 (KSGEKVQVPEKHVPHFKPGKELRERVDGRAGEPLKND).

The protein belongs to the bacterial histone-like protein family. As to quaternary structure, heterodimer of an alpha and a beta chain.

In terms of biological role, this protein is one of the two subunits of integration host factor, a specific DNA-binding protein that functions in genetic recombination as well as in transcriptional and translational control. This Burkholderia thailandensis (strain ATCC 700388 / DSM 13276 / CCUG 48851 / CIP 106301 / E264) protein is Integration host factor subunit beta.